We begin with the raw amino-acid sequence, 1141 residues long: Isoleucine--tRNA ligase (1141 aa).

The 'HIGH' region signature appears at 50 to 60; that stretch reads PSANGMPGIHH. The short motif at 689–693 is the 'KMSKS' region element; the sequence is KMSKR. Lys692 is a binding site for ATP.

The protein belongs to the class-I aminoacyl-tRNA synthetase family. IleS type 2 subfamily. Monomer. The cofactor is Zn(2+).

The protein localises to the cytoplasm. It catalyses the reaction tRNA(Ile) + L-isoleucine + ATP = L-isoleucyl-tRNA(Ile) + AMP + diphosphate. Catalyzes the attachment of isoleucine to tRNA(Ile). As IleRS can inadvertently accommodate and process structurally similar amino acids such as valine, to avoid such errors it has two additional distinct tRNA(Ile)-dependent editing activities. One activity is designated as 'pretransfer' editing and involves the hydrolysis of activated Val-AMP. The other activity is designated 'posttransfer' editing and involves deacylation of mischarged Val-tRNA(Ile). This is Isoleucine--tRNA ligase from Bacteroides fragilis (strain ATCC 25285 / DSM 2151 / CCUG 4856 / JCM 11019 / LMG 10263 / NCTC 9343 / Onslow / VPI 2553 / EN-2).